The chain runs to 148 residues: Endothelial differentiation-related factor 1 (148 aa).

At Ala-2 the chain carries N-acetylalanine. The residue at position 4 (Ser-4) is a Phosphoserine. Residue Lys-25 is modified to N6-methyllysine. A compositionally biased stretch (basic and acidic residues) spans 33-42 (RRGEDVETSK). Residues 33–66 (RRGEDVETSKKWAAGQNKQHSITKNTAKLDRETE) form a disordered region. The interaction with NR5A2, PPARG and NR1H3 stretch occupies residues 37–113 (DVETSKKWAA…QVIADYESGR (77 aa)). Over residues 48 to 58 (QNKQHSITKNT) the composition is skewed to polar residues. An interaction with TBP and NR5A1 region spans residues 69-108 (HHDRVTLEVGKVIQQGRQSKGLTQKDLATKINEKPQVIAD). The IQ motif signature appears at 81 to 88 (IQQGRQSK). Positions 81-135 (IQQGRQSKGLTQKDLATKINEKPQVIADYESGRAIPNNQVLGKIERAIGLKLRGK) constitute an HTH cro/C1-type domain. Residues 92–111 (QKDLATKINEKPQVIADYES) constitute a DNA-binding region (H-T-H motif).

As to quaternary structure, interacts with TBP and the transcription factor IID (TFIID) complex, NR5A2, NR1H3 and PPARG. Interaction with TBP is regulated by phosphorylation. Binds NR5A1, ATF1, FOS and JUN via their conserved basic region. Binding to calmodulin is regulated by calcium and phosphorylation of the IQ motif. Phosphorylated (by PKA and PKC). As to expression, expressed in brain, liver, lung, kidney and heart (at protein level). Ubiquitously expressed. More abundant in heart, pancreas, liver, intestine and adipose tissues.

Its subcellular location is the cytoplasm. It is found in the nucleus. In terms of biological role, transcriptional coactivator stimulating NR5A1 and ligand-dependent NR1H3/LXRA and PPARG transcriptional activities. Enhances the DNA-binding activity of ATF1, ATF2, CREB1 and NR5A1. Regulates nitric oxid synthase activity probably by sequestering calmodulin in the cytoplasm. May function in endothelial cells differentiation, hormone-induced cardiomyocytes hypertrophy and lipid metabolism. The sequence is that of Endothelial differentiation-related factor 1 (EDF1) from Homo sapiens (Human).